The sequence spans 445 residues: Homogentisate 1,2-dioxygenase (445 aa).

N6-acetyllysine is present on lysine 98. Fe cation-binding residues include histidine 335, glutamate 341, and histidine 371. Lysine 414 bears the N6-succinyllysine mark.

Belongs to the homogentisate dioxygenase family. In terms of assembly, homohexamer arranged as a dimer of trimers. Fe cation serves as cofactor. As to expression, highest expression in the prostate, small intestine, colon, kidney and liver.

It carries out the reaction homogentisate + O2 = 4-maleylacetoacetate + H(+). Its pathway is amino-acid degradation; L-phenylalanine degradation; acetoacetate and fumarate from L-phenylalanine: step 4/6. In terms of biological role, catalyzes the conversion of homogentisate to maleylacetoacetate. The polypeptide is Homogentisate 1,2-dioxygenase (HGD) (Homo sapiens (Human)).